Here is an 85-residue protein sequence, read N- to C-terminus: CDC42 small effector protein 2 (85 aa).

Residues C10 and C11 are each lipidated (S-palmitoyl cysteine). The region spanning 29-42 (IGEPTNFVHTAHVG) is the CRIB domain.

Belongs to the CDC42SE/SPEC family.

It is found in the cytoplasm. It localises to the cytoskeleton. Its subcellular location is the cell membrane. Probably involved in the organization of the actin cytoskeleton by acting downstream of CDC42, inducing actin filament assembly. This is CDC42 small effector protein 2 (cdc42se2) from Danio rerio (Zebrafish).